The chain runs to 136 residues: Glutaredoxin-C7 (136 aa).

The 107-residue stretch at 29–135 (LLRIESLASE…PLLKDAGALW (107 aa)) folds into the Glutaredoxin domain. An intrachain disulfide couples C49 to C52. Residues 133–136 (ALWL) carry the Responsive for interaction with TGA factors motif.

This sequence belongs to the glutaredoxin family. CC-type subfamily. Interacts with TGA2, TGA3, TGA7 and PAN. Interacts with TGA9 and TGA10 in the nucleus. Highly expressed in inflorescences, roots, and siliques. Expressed at lower levels in mature flowers.

It is found in the cytoplasm. The protein resides in the nucleus. Has a glutathione-disulfide oxidoreductase activity in the presence of NADPH and glutathione reductase. Reduces low molecular weight disulfides and proteins. Involved in flower development as a regulator of petal primorida initiation and further petal morphogenesis. May mediate post-translational modifications of target proteins required for normal petal organ initiation and morphogenesis. ROXY1/TGA protein interactions can occur in vivo and support their biological relevance in petal development. May be involved in the regulation of the floral regulator class C gene AG (AGAMOUS). In Arabidopsis thaliana (Mouse-ear cress), this protein is Glutaredoxin-C7 (GRXC7).